The chain runs to 523 residues: F-box only protein 31-B (523 aa).

The F-box domain occupies 59-105; it reads PRSLLQLPPEILVEIFSSLPGTELPSLAQVCRKFRQILTTDTIWKRR. Residues Cys201, His209, Cys225, and His231 each coordinate Zn(2+). Positions 372–427 are disordered; the sequence is IQREQRQTGNEEDDGKGAGPDRAEHSQQPAPVHRPAKEDVNGVDNADDREQKPPNV. Basic and acidic residues-rich tracts occupy residues 386-396 and 406-423; these read GKGAGPDRAEH and PAKE…REQK.

This sequence belongs to the FBXO31 family. In terms of assembly, part of a SCF (SKP1-cullin-F-box) protein ligase complex SCF(FBXO31).

The protein localises to the cytoplasm. It participates in protein modification; protein ubiquitination. Functionally, substrate-recognition component of the SCF(FBXO31) protein ligase complex, which specifically mediates the ubiquitination of proteins amidated at their C-terminus in response to oxidative stress, leading to their degradation by the proteasome. Fbxo31 specifically recognizes and binds C-terminal peptides bearing an amide: C-terminal amidation in response to oxidative stress takes place following protein fragmentation. The SCF(FBXO31) also plays a role in G1 arrest following DNA damage by mediating ubiquitination of phosphorylated cyclin-D1 (ccnd1), promoting its degradation by the proteasome, resulting in G1 arrest. The SCF(FBXO31) complex is however not a major regulator of ccnd1 stability during the G1/S transition. The chain is F-box only protein 31-B (fbxo31-b) from Xenopus laevis (African clawed frog).